Here is a 242-residue protein sequence, read N- to C-terminus: UDP-2,3-diacylglucosamine hydrolase (242 aa).

Residues Asp-9, His-11, Asp-42, Asn-79, and His-114 each coordinate Mn(2+). A substrate-binding site is contributed by 79–80; it reads NR. The substrate site is built by Asp-122, Ser-160, Asn-164, Lys-167, and His-195. Residues His-195 and His-197 each contribute to the Mn(2+) site.

Belongs to the LpxH family. Requires Mn(2+) as cofactor.

The protein localises to the cell inner membrane. The enzyme catalyses UDP-2-N,3-O-bis[(3R)-3-hydroxytetradecanoyl]-alpha-D-glucosamine + H2O = 2-N,3-O-bis[(3R)-3-hydroxytetradecanoyl]-alpha-D-glucosaminyl 1-phosphate + UMP + 2 H(+). It functions in the pathway glycolipid biosynthesis; lipid IV(A) biosynthesis; lipid IV(A) from (3R)-3-hydroxytetradecanoyl-[acyl-carrier-protein] and UDP-N-acetyl-alpha-D-glucosamine: step 4/6. Its function is as follows. Hydrolyzes the pyrophosphate bond of UDP-2,3-diacylglucosamine to yield 2,3-diacylglucosamine 1-phosphate (lipid X) and UMP by catalyzing the attack of water at the alpha-P atom. Involved in the biosynthesis of lipid A, a phosphorylated glycolipid that anchors the lipopolysaccharide to the outer membrane of the cell. This Shewanella loihica (strain ATCC BAA-1088 / PV-4) protein is UDP-2,3-diacylglucosamine hydrolase.